The primary structure comprises 150 residues: Classical arabinogalactan protein 6 (150 aa).

The first 20 residues, 1–20 (MARQFVVLVLLTLTIATAFA), serve as a signal peptide directing secretion. Composition is skewed to low complexity over residues 19-75 (FAAD…SPAA) and 85-98 (SASS…APTV). Residues 19-131 (FAADAPSASP…ESPKSGAVTT (113 aa)) are disordered. Serine 126 carries the GPI-anchor amidated serine lipid modification. Residues 127–150 (GAVTTAKFSVVGTVATVGFFFFSF) constitute a propeptide, removed in mature form.

This sequence belongs to the classical AGP family. In terms of processing, O-glycosylated on the hydroxyproline residues. In terms of tissue distribution, expressed in the anthers.

The protein resides in the cell membrane. Its function is as follows. Proteoglycan that seems to be implicated in diverse developmental roles such as differentiation, cell-cell recognition, embryogenesis and programmed cell death. Plays an important role during the formation of the nexine layer of the pollen wall. In Arabidopsis thaliana (Mouse-ear cress), this protein is Classical arabinogalactan protein 6 (AGP6).